The chain runs to 411 residues: Thyroid hormone receptor beta (411 aa).

Residues 1 to 24 (MTPNSMTENGLPAWDKPKPCPDGE) form a disordered region. The modulating stretch occupies residues 1–104 (MTPNSMTENG…IPSYLDKDEL (104 aa)). The segment covering 15-24 (DKPKPCPDGE) has biased composition (basic and acidic residues). Positions 105, 108, 122, 125, 143, 149, 159, and 162 each coordinate Zn(2+). 2 consecutive NR C4-type zinc fingers follow at residues 105 to 125 (CVVC…CEGC) and 143 to 167 (CKYE…FKKC). A DNA-binding region (nuclear receptor) is located at residues 105-179 (CVVCGDKATG…VGMATDLVLD (75 aa)). The region spanning 215–411 (QEWELIKTVT…EHYINYRRNS (197 aa)) is the NR LBD domain. Positions 242–411 (KFLPEDIGQA…EHYINYRRNS (170 aa)) are interaction with NR2F6. Residues R280 and N329 each contribute to the 3,3',5-triiodo-L-thyronine site. Residues R280 and N329 each coordinate L-thyroxine.

This sequence belongs to the nuclear hormone receptor family. NR1 subfamily. Binds DNA as a dimer; homodimer and heterodimer with RXRA. Interacts with the coactivators NCOA1/SRC1, NCOA2/GRIP1, NCOA7 and MED1/TRAP220 in a ligand-inducible manner. Interacts with the corepressor NCOR1 in absence of ligand. Interacts with C1D. Interacts with NR2F6; the interaction impairs the binding of the THRB homodimer and THRB:RXRB heterodimer to T3 response elements. Interacts with PRMT2 and THRSP. Interacts with TACC1; this interaction is decreased in the presence of thyroid hormone T3.

It localises to the nucleus. Functionally, nuclear hormone receptor that can act as a repressor or activator of transcription. High affinity receptor for thyroid hormones, including triiodothyronine and thyroxine. The polypeptide is Thyroid hormone receptor beta (THRB) (Ovis aries (Sheep)).